Here is a 375-residue protein sequence, read N- to C-terminus: Filamin-binding LIM protein 1 (375 aa).

The interval Met-1–Asn-69 is filamin-binding. The interval Ala-40–Pro-176 is disordered. The segment covering Lys-60 to Gly-83 has biased composition (polar residues). Composition is skewed to pro residues over residues Leu-98 to Ala-107 and Leu-133 to Ala-144. 3 LIM zinc-binding domains span residues Asp-183–Lys-244, Cys-245–Ala-302, and Pro-303–Ala-372. The FERMT2-binding stretch occupies residues Ile-278–Cys-375.

In terms of assembly, interacts with FERMT2, FLNA, FLNB and FLNC. Interacts with NKX2-5.

The protein localises to the cell junction. It localises to the focal adhesion. The protein resides in the cytoplasm. Its subcellular location is the cytoskeleton. It is found in the stress fiber. Functionally, serves as an anchoring site for cell-ECM adhesion proteins and filamin-containing actin filaments. Is implicated in cell shape modulation (spreading) and motility. May participate in the regulation of filamin-mediated cross-linking and stabilization of actin filaments. May also regulate the assembly of filamin-containing signaling complexes that control actin assembly. Promotes dissociation of FLNA from ITGB3 and ITGB7. Promotes activation of integrins and regulates integrin-mediated cell-cell adhesion. This chain is Filamin-binding LIM protein 1 (Fblim1), found in Mus musculus (Mouse).